The chain runs to 571 residues: Zinc finger protein 181 (571 aa).

The KRAB domain occupies 4-76 (VTFNDVAIDF…EKKLSKGMIP (73 aa)). Residues K109 and K126 each participate in a glycyl lysine isopeptide (Lys-Gly) (interchain with G-Cter in SUMO2) cross-link. 11 consecutive C2H2-type zinc fingers follow at residues 237–259 (YTCS…WRIH), 265–287 (YECR…LISH), 293–315 (YKCI…QSTH), 321–343 (YECM…LRIH), 349–371 (YECR…QKIH), 377–399 (YECR…QRIH), 405–427 (YECN…QSIH), 433–455 (FECQ…LRNH), 461–483 (YECS…HRIH), 489–511 (YECI…QRIH), and 517–539 (YKCN…QRVH).

It belongs to the krueppel C2H2-type zinc-finger protein family.

It localises to the nucleus. May be involved in transcriptional regulation. This is Zinc finger protein 181 (ZNF181) from Homo sapiens (Human).